The chain runs to 283 residues: 2-dehydro-3-deoxyphosphooctonate aldolase (283 aa).

The protein belongs to the KdsA family.

The protein localises to the cytoplasm. The catalysed reaction is D-arabinose 5-phosphate + phosphoenolpyruvate + H2O = 3-deoxy-alpha-D-manno-2-octulosonate-8-phosphate + phosphate. Its pathway is carbohydrate biosynthesis; 3-deoxy-D-manno-octulosonate biosynthesis; 3-deoxy-D-manno-octulosonate from D-ribulose 5-phosphate: step 2/3. It participates in bacterial outer membrane biogenesis; lipopolysaccharide biosynthesis. This Laribacter hongkongensis (strain HLHK9) protein is 2-dehydro-3-deoxyphosphooctonate aldolase.